The primary structure comprises 201 residues: Adenylyl-sulfate kinase (201 aa).

35 to 42 (GLSGSGKS) is a binding site for ATP. The active-site Phosphoserine intermediate is the Ser-109.

The protein belongs to the APS kinase family.

The enzyme catalyses adenosine 5'-phosphosulfate + ATP = 3'-phosphoadenylyl sulfate + ADP + H(+). The protein operates within sulfur metabolism; hydrogen sulfide biosynthesis; sulfite from sulfate: step 2/3. Functionally, catalyzes the synthesis of activated sulfate. This Enterobacter sp. (strain 638) protein is Adenylyl-sulfate kinase.